Reading from the N-terminus, the 300-residue chain is F-box associated domain-containing protein sdz-33 (300 aa).

In terms of domain architecture, F-box spans 5 to 51 (PFPILCLPDFVLQKSLKLMGVVEHLCLSILSKNIKQLIATLKGYPKC).

Expressed in D-type motor neuron cell bodies.

Functionally, substrate recognition component of E3 ubiquitin-protein ligase complex which mediates the ubiquitination and subsequent proteasomal degradation of target proteins such as mdl-1. Positively regulates axon regeneration by targeting mdl-1 for ubiquitin-mediated degradation; probably thereby reducing levels of mdl-1-mxl-1 heterodimers, allowing free mxl-1 to form complexes with tdpt-1 and thus inhibiting tdpt-1-dependent sumoylation of ets-4. The sequence is that of F-box associated domain-containing protein sdz-33 from Caenorhabditis elegans.